The sequence spans 418 residues: N-acetylglucosamine-6-phosphate deacetylase (418 aa).

An a divalent metal cation-binding site is contributed by Glu-154. 165–166 (CH) contacts substrate. A divalent metal cation is bound by residues His-223 and His-244. Residues 247 to 248 (NA), Arg-255, and 281 to 284 (DGIH) contribute to the substrate site. The Proton donor/acceptor role is filled by Asp-306. 340–342 (TAG) lines the substrate pocket.

It belongs to the metallo-dependent hydrolases superfamily. NagA family. Requires a divalent metal cation as cofactor.

It carries out the reaction N-acetyl-D-glucosamine 6-phosphate + H2O = D-glucosamine 6-phosphate + acetate. This chain is N-acetylglucosamine-6-phosphate deacetylase, found in Caenorhabditis elegans.